The sequence spans 118 residues: UPF0148 protein LS215_1455 (118 aa).

Belongs to the UPF0148 family.

The polypeptide is UPF0148 protein LS215_1455 (Saccharolobus islandicus (strain L.S.2.15 / Lassen #1) (Sulfolobus islandicus)).